A 233-amino-acid chain; its full sequence is MTPHINAKIGDFYPQCLLCGDPLRVSYIAKKFLQDAKEITNVRNMLGFSGKYKGKGISLMGHGMGIASCTIYVTELIKTYQVKELLRIGTCGAISPKVGLKDIIMAMGASTDSKTNRVRFLNHDLSATPDFELSLRAYQTAKRLGIDLKVGNVFSSDFFYSFETHAFDLMAQYNHLAIEMEAAGLYATAMELSAKALCLCSVSDHLITKEALSPKERVESFDNMIILALEMMS.

Position 4 (histidine 4) interacts with a purine D-ribonucleoside. Residues glycine 20, arginine 24, arginine 43, and 87–90 (RIGT) contribute to the phosphate site. Residues 179-181 (EME) and 203-204 (SD) contribute to the a purine D-ribonucleoside site. Catalysis depends on aspartate 204, which acts as the Proton donor.

It belongs to the PNP/UDP phosphorylase family. In terms of assembly, homohexamer; trimer of homodimers.

The catalysed reaction is a purine D-ribonucleoside + phosphate = a purine nucleobase + alpha-D-ribose 1-phosphate. It carries out the reaction a purine 2'-deoxy-D-ribonucleoside + phosphate = a purine nucleobase + 2-deoxy-alpha-D-ribose 1-phosphate. In terms of biological role, catalyzes the reversible phosphorolytic breakdown of the N-glycosidic bond in the beta-(deoxy)ribonucleoside molecules, with the formation of the corresponding free purine bases and pentose-1-phosphate. This chain is Purine nucleoside phosphorylase DeoD-type, found in Helicobacter pylori (strain HPAG1).